An 875-amino-acid chain; its full sequence is Protein HIR2 (875 aa).

WD repeat units lie at residues 10-47, 118-158, 163-201, 237-277, 278-316, and 320-359; these read IHNE…DTAF, KSPS…KLSE, KASK…THKL, PNNA…PAFY, EKPN…PLFN, and VSST…LGVA. Positions 398–473 are disordered; sequence ESASAAPIPN…IAPGSKKQKK (76 aa). Over residues 424-446 the composition is skewed to polar residues; that stretch reads ANNQTNGIKTIQSTSMEFNTPSY. WD repeat units follow at residues 546–587 and 589–626; these read LFQD…LMAP and VLGV…LAFP. Ser713 is subject to Phosphoserine.

Belongs to the WD repeat HIR1 family. As to quaternary structure, component of the HIR complex, composed of HIR1, HIR2, HIR3 and HPC2. This complex may consist of one copy of HIR1 and HIR3 and two copies of HIR2 and HPC2. The HIR complex interacts with ASF1. Interacts with SNF2. Interacts with SNF5. Interacts with SWI3. Interacts with RTT106.

The protein localises to the nucleus. Its subcellular location is the chromosome. In terms of biological role, component of the HIR complex, which cooperates with ASF1 to promote replication-independent chromatin assembly. The HIR complex is also required for the periodic repression of three of the four histone gene loci during the cell cycle as well as for autogenous regulation of the HTA1-HTB1 locus by H2A and H2B. DNA-binding by the HIR complex may repress transcription by inhibiting nucleosome remodeling by the SWI/SNF complex. The HIR complex may also be required for transcriptional silencing of centromeric, telomeric and mating-type loci in the absence of CAF-1. This is Protein HIR2 (HIR2) from Saccharomyces cerevisiae (strain ATCC 204508 / S288c) (Baker's yeast).